Consider the following 127-residue polypeptide: Large ribosomal subunit protein bL17 (127 aa).

Belongs to the bacterial ribosomal protein bL17 family. As to quaternary structure, part of the 50S ribosomal subunit. Contacts protein L32.

This is Large ribosomal subunit protein bL17 from Ligilactobacillus salivarius (strain UCC118) (Lactobacillus salivarius).